The chain runs to 399 residues: Protein phosphatase 2C 37 (399 aa).

The 286-residue stretch at Lys-104–Leu-389 folds into the PPM-type phosphatase domain. Mn(2+) contacts are provided by Asp-142 and Gly-143. Positions 146, 148, 208, and 210 each coordinate Zn(2+). Mn(2+) contacts are provided by Asp-327, Asp-331, and Asp-380.

It belongs to the PP2C family. As to quaternary structure, interacts with AKT2/AKT3. Interacts with ABA-bounded PYR1, PYL1, PYL2, PYL3, PYL4, PYL9 and PYL12, and with free PYL2, PYL3, PYL4 and PYL13. Binds to and inactivates SLAC1 and SRK2E. The inactivation of SRK2E does not require phosphatase activity. Interacts with CBL1, CBL2, CBL3, CBL5, and CBL7, but not CBL4, CBL6, and CBL9. Interacts with RGLG1 and RGLG5. Interacts with KIN10. Requires Mg(2+) as cofactor. It depends on Mn(2+) as a cofactor. Post-translationally, ubiquitinated by RGLG1 and RGLG5 in response to abscisic acid (ABA). Ubiquitination of PP2CA leads to its degradation by the proteasome. As to expression, mostly expressed in seeds and leaves, and, to a lower extent, in roots, stems, and flowers, particularly in siliques. Essentially found in the phloem.

The catalysed reaction is O-phospho-L-seryl-[protein] + H2O = L-seryl-[protein] + phosphate. The enzyme catalyses O-phospho-L-threonyl-[protein] + H2O = L-threonyl-[protein] + phosphate. With respect to regulation, repressed by PYR/PYL/RCAR ABA receptors in an ABA-dependent manner. Major negative regulator of abscisic acid (ABA) responses during seed germination and cold acclimation. Confers insensitivity to ABA. Modulates negatively the AKT2/3 activity, which mediates K(+) transport and membrane polarization during stress situations, probably by dephosphorylation. Prevents stomata closure by inactivating the S-type anion efflux channel SLAC1 and its activator SRK2E. Represses KIN10 activity by the specific dephosphorylation of its T-loop Thr-198, leading to a poststress inactivation of SnRK1 signaling. In Arabidopsis thaliana (Mouse-ear cress), this protein is Protein phosphatase 2C 37 (PP2CA).